Here is a 465-residue protein sequence, read N- to C-terminus: Glutamate--tRNA ligase 2 (465 aa).

A 'HIGH' region motif is present at residues 8–18 (PSPTGLMHLGN). The short motif at 249 to 253 (PLSKR) is the 'KMSKS' region element. Residue Lys252 participates in ATP binding.

It belongs to the class-I aminoacyl-tRNA synthetase family. Glutamate--tRNA ligase type 1 subfamily. In terms of assembly, monomer.

The protein resides in the cytoplasm. It catalyses the reaction tRNA(Glu) + L-glutamate + ATP = L-glutamyl-tRNA(Glu) + AMP + diphosphate. Catalyzes the attachment of glutamate to tRNA(Glu) in a two-step reaction: glutamate is first activated by ATP to form Glu-AMP and then transferred to the acceptor end of tRNA(Glu). The polypeptide is Glutamate--tRNA ligase 2 (Coxiella burnetii (strain RSA 331 / Henzerling II)).